The following is a 185-amino-acid chain: Prorelaxin (185 aa).

Positions 1 to 24 (MPRLFLFHLLGVCLLLNQFSRAVA) are cleaved as a signal peptide. Cystine bridges form between Cys-35–Cys-172, Cys-47–Cys-185, and Cys-171–Cys-176. A propeptide spans 56–157 (SLNQEDAPLK…LRSLGLDTHS (102 aa)) (connecting peptide).

It belongs to the insulin family. As to quaternary structure, heterodimer of a B chain and an A chain linked by two disulfide bonds.

Its subcellular location is the secreted. Relaxin is an ovarian hormone that acts with estrogen to produce dilatation of the birth canal in many mammals. May be involved in remodeling of connective tissues during pregnancy, promoting growth of pubic ligaments and ripening of the cervix. This chain is Prorelaxin (RLN), found in Macaca mulatta (Rhesus macaque).